The sequence spans 205 residues: Guanylyl cyclase-activating protein 1 (205 aa).

Gly-2 carries the N-myristoyl glycine lipid modification. Asn-3 carries the post-translational modification Deamidated asparagine. EF-hand domains lie at 30–48 (SGQLTQHEFKQFFGLKNLS), 50–85 (ASNQYIEQMFDTFDFNKDGYMDFMEYVAALSLVLKG), 86–121 (KVEQKLRWYFKLYDVDGNGCIDRGELLNIIKAIRAI), and 129–164 (TAEEFTDMVFDKIDINGDGELSLEEFIEGVQKDELL). Ca(2+) is bound by residues Asp-63, Asn-65, Asp-67, Tyr-69, Glu-74, Asp-99, Asp-101, Asn-103, Cys-105, Glu-110, Asp-142, Asn-144, Asp-146, Glu-148, and Glu-153.

Retina.

Its function is as follows. Regulatory protein that inhibits guanylyl cyclase when free calcium ions concentration is elevated. This Ca(2+)-sensitive regulation of retinal guanylyl cyclase is a key event in recovery of the dark state of rod photoreceptors following light exposure. The protein is Guanylyl cyclase-activating protein 1 (GUCA1A) of Lithobates pipiens (Northern leopard frog).